The primary structure comprises 63 residues: U7-theraphotoxin-Cg1a (63 aa).

The first 21 residues, 1 to 21 (MKTSILFVIFGLALLFALSVA), serve as a signal peptide directing secretion. Residues 22–31 (IEMEEEETDR) constitute a propeptide that is removed on maturation. Cystine bridges form between cysteine 33–cysteine 47, cysteine 40–cysteine 52, and cysteine 46–cysteine 59.

In terms of tissue distribution, expressed by the venom gland.

The protein localises to the secreted. Functionally, inhibits preferentially tetrodotoxin-insensitive sodium currents (Nav) on rat cardiac myocytes (IC(50) is 0.26 uM) and has weaker inhibition activity toward tetrodotoxin-sensitive sodium currents on rat dorsal root ganglion (DRG) sensory neurons (IC(50) is 0.83 uM) and on cockroach dorsal unpaired median (DUM) neurons (IC(50) is 1.19 uM). Has no significant effect on potassium currents on DRG neurons. This is U7-theraphotoxin-Cg1a from Chilobrachys guangxiensis (Chinese earth tiger tarantula).